A 213-amino-acid chain; its full sequence is ATP-dependent dethiobiotin synthetase BioD (213 aa).

13 to 18 contributes to the ATP binding site; it reads GIGKTV. Residue T17 coordinates Mg(2+). Residue K33 is part of the active site. E100 is a binding site for Mg(2+). ATP is bound by residues 100 to 103 and 184 to 186; these read EGAG and PRL.

Belongs to the dethiobiotin synthetase family. In terms of assembly, homodimer. Mg(2+) is required as a cofactor.

Its subcellular location is the cytoplasm. The catalysed reaction is (7R,8S)-7,8-diammoniononanoate + CO2 + ATP = (4R,5S)-dethiobiotin + ADP + phosphate + 3 H(+). It functions in the pathway cofactor biosynthesis; biotin biosynthesis; biotin from 7,8-diaminononanoate: step 1/2. In terms of biological role, catalyzes a mechanistically unusual reaction, the ATP-dependent insertion of CO2 between the N7 and N8 nitrogen atoms of 7,8-diaminopelargonic acid (DAPA, also called 7,8-diammoniononanoate) to form a ureido ring. The chain is ATP-dependent dethiobiotin synthetase BioD from Rhodopseudomonas palustris (strain HaA2).